The sequence spans 476 residues: MNYFPVFADLNNRPVLVVGGGTIAARKVNLLLKANAEVRITAQKLNAELTALVEQDRIIWIAKEFHGEQIRNVFLVVAATDDEQLNEQVFQVAESRQKLVNVVDDQARCSFIFPSIIDRSPIQVAVSSGGAAPVLARLLREKLEALLPQHLGVMADISGKWRHKVKQQLKTITERRRFWESLFNGRFSRLLKNRQIEAAKKELELQLTKDYQGGSVSLVGAGPGDAGLLTLKGLQEIQQADVVLYDALVSAEILDLVRRDAELIFVGKRAQGRQVAQQETNQLLADLALQGKRVVRLKGGDPFVFGRGGEELEVLAQQGIPFSVVPGITAAIGATAYAGIPLTHRDYAQSAVFVTGHRKADASDIEWQTLARSNQTLVIYMGTLKAATIAQSLQQYGRAASTPVAVISQGTQETQHTQIGTLKNLAELAEKAPTPALIVVGEVVSLHEKLAWFGEDKFAQKRPHFTLDSLRIERVA.

Residues 1–203 are precorrin-2 dehydrogenase /sirohydrochlorin ferrochelatase; it reads MNYFPVFADL…RQIEAAKKEL (203 aa). NAD(+)-binding positions include 22-23 and 43-44; these read TI and QK. Serine 128 bears the Phosphoserine mark. Residues 214-476 form a uroporphyrinogen-III C-methyltransferase region; the sequence is GSVSLVGAGP…LDSLRIERVA (263 aa). S-adenosyl-L-methionine is bound at residue proline 223. Catalysis depends on aspartate 246, which acts as the Proton acceptor. Catalysis depends on lysine 268, which acts as the Proton donor. Residues 299-301, valine 304, 329-330, methionine 381, and glycine 410 contribute to the S-adenosyl-L-methionine site; these read GGD and TA.

The protein in the N-terminal section; belongs to the precorrin-2 dehydrogenase / sirohydrochlorin ferrochelatase family. In the C-terminal section; belongs to the precorrin methyltransferase family.

It carries out the reaction uroporphyrinogen III + 2 S-adenosyl-L-methionine = precorrin-2 + 2 S-adenosyl-L-homocysteine + H(+). It catalyses the reaction precorrin-2 + NAD(+) = sirohydrochlorin + NADH + 2 H(+). The catalysed reaction is siroheme + 2 H(+) = sirohydrochlorin + Fe(2+). It participates in cofactor biosynthesis; adenosylcobalamin biosynthesis; precorrin-2 from uroporphyrinogen III: step 1/1. Its pathway is cofactor biosynthesis; adenosylcobalamin biosynthesis; sirohydrochlorin from precorrin-2: step 1/1. It functions in the pathway porphyrin-containing compound metabolism; siroheme biosynthesis; precorrin-2 from uroporphyrinogen III: step 1/1. The protein operates within porphyrin-containing compound metabolism; siroheme biosynthesis; siroheme from sirohydrochlorin: step 1/1. It participates in porphyrin-containing compound metabolism; siroheme biosynthesis; sirohydrochlorin from precorrin-2: step 1/1. Multifunctional enzyme that catalyzes the SAM-dependent methylations of uroporphyrinogen III at position C-2 and C-7 to form precorrin-2 via precorrin-1. Then it catalyzes the NAD-dependent ring dehydrogenation of precorrin-2 to yield sirohydrochlorin. Finally, it catalyzes the ferrochelation of sirohydrochlorin to yield siroheme. This chain is Siroheme synthase, found in Mannheimia succiniciproducens (strain KCTC 0769BP / MBEL55E).